The primary structure comprises 353 residues: MPTSLLRVGVVFGGASGEHAVSIRSARTVIEAFSAPENQERFAVIPHYIDREGRWWGPAVAERALEQNKALDAHELPQPLPAPGLRHWPVDPDSVDLWYPVLHGPNGEDGTVQGLFTLMNKPFVGSGVLGSAVGMDKLAMKAAFAAAGLSQVPYMGLTAADLEDPERLEQLLTRVEQELGYPCFVKPANLGSSVGITKANNRDELLAGLHQAAALDPRLLVEQGVNARELECAVLGRRHLRASVVGEIRFDADWYDYETKYTEGRSHTLIPAPLPALVSQQIQAMAIRACHAVHAFGQARVDVFYDETSGEIWLNEINTLPGFTSQSMYPTLWAASGIPLPQLVAELVDTAQE.

The 209-residue stretch at 141-349 (KAAFAAAGLS…LPQLVAELVD (209 aa)) folds into the ATP-grasp domain. Residue 176 to 231 (EQELGYPCFVKPANLGSSVGITKANNRDELLAGLHQAAALDPRLLVEQGVNARELE) coordinates ATP. Residues Asp302, Glu316, and Asn318 each contribute to the Mg(2+) site.

Belongs to the D-alanine--D-alanine ligase family. Requires Mg(2+) as cofactor. Mn(2+) serves as cofactor.

The protein localises to the cytoplasm. It carries out the reaction 2 D-alanine + ATP = D-alanyl-D-alanine + ADP + phosphate + H(+). It participates in cell wall biogenesis; peptidoglycan biosynthesis. In terms of biological role, cell wall formation. This is D-alanine--D-alanine ligase from Synechococcus sp. (strain WH7803).